Here is a 212-residue protein sequence, read N- to C-terminus: Protein-L-isoaspartate O-methyltransferase (212 aa).

Residue Ser60 is part of the active site.

This sequence belongs to the methyltransferase superfamily. L-isoaspartyl/D-aspartyl protein methyltransferase family.

The protein localises to the cytoplasm. It carries out the reaction [protein]-L-isoaspartate + S-adenosyl-L-methionine = [protein]-L-isoaspartate alpha-methyl ester + S-adenosyl-L-homocysteine. Functionally, catalyzes the methyl esterification of L-isoaspartyl residues in peptides and proteins that result from spontaneous decomposition of normal L-aspartyl and L-asparaginyl residues. It plays a role in the repair and/or degradation of damaged proteins. The protein is Protein-L-isoaspartate O-methyltransferase of Pseudomonas entomophila (strain L48).